Reading from the N-terminus, the 262-residue chain is Late embryogenesis abundant protein 31 (262 aa).

A Nuclear localization signal (NLS) motif is present at residues 6-10 (QPKRP). 3 consecutive SMP domains span residues 14–68 (VTYG…ANKR), 136–192 (ITIG…NHNA), and 201–260 (IKLI…NERA).

The protein belongs to the LEA type SMP family. In terms of tissue distribution, embryo specific, only in dry mature seeds.

Its subcellular location is the nucleus. The protein resides in the nucleolus. It is found in the cytoplasm. Its function is as follows. LEA proteins are late embryonic proteins abundant in higher plant seed embryos. The function of those proteins is not known. Promotes germination rate. Enhances cation toxicity (e.g. lithium ion) and osmotic stress (e.g. NaCl and sorbitol) tolerance during germination and in seedlings. The chain is Late embryogenesis abundant protein 31 from Arabidopsis thaliana (Mouse-ear cress).